We begin with the raw amino-acid sequence, 329 residues long: Malate dehydrogenase (329 aa).

12–18 is an NAD(+) binding site; the sequence is GAAGQIG. Residues arginine 93 and arginine 99 each coordinate substrate. Residues asparagine 106, glutamine 113, and 130–132 each bind NAD(+); that span reads TGN. 2 residues coordinate substrate: asparagine 132 and arginine 163. Histidine 188 acts as the Proton acceptor in catalysis.

It belongs to the LDH/MDH superfamily. MDH type 2 family.

It catalyses the reaction (S)-malate + NAD(+) = oxaloacetate + NADH + H(+). In terms of biological role, catalyzes the reversible oxidation of malate to oxaloacetate. The protein is Malate dehydrogenase of Mycobacterium avium (strain 104).